The sequence spans 596 residues: Bromodomain-containing protein 9 (596 aa).

The span at M1–A10 shows a compositional bias: basic residues. Disordered stretches follow at residues M1–K26 and E38–E137. Basic and acidic residues predominate over residues S50–R62. S56 is subject to Phosphoserine. Basic residues predominate over residues H63–K73. Residues S74–R85 show a composition bias toward basic and acidic residues. Over residues R86–E97 the composition is skewed to basic residues. The span at D111–V126 shows a compositional bias: basic and acidic residues. Residues N136–A240 form the Bromo domain. The segment at T214 to N216 is histone H4K5ac H4K8ac and histone H4K5bu H4K8bu binding. N6-acetyllysine; alternate is present on K372. A Glycyl lysine isopeptide (Lys-Gly) (interchain with G-Cter in SUMO2); alternate cross-link involves residue K372. The interval A536–N596 is disordered. Over residues S543–A555 the composition is skewed to low complexity. A phosphoserine mark is found at S565 and S587.

As to quaternary structure, binds acetylated histones H3 and H4. Binds butyrylated histone H4. Component of the multiprotein chromatin-remodeling subcomplex SWI/SNF called GBAF, which includes at least BICRA or BICRAL (mutually exclusive), BRD9, SS18, the core BAF subunits, SMARCA2/BRM, SMARCA4/BRG1/BAF190A, ACTL6A/BAF53, SMARCC1/BAF155, and SMARCD1/BAF60A. Interacts (via N-terminal bromodomain) with acetylated RAD54. Interacts (via C-terminus) with RAD51.

The protein localises to the nucleus. Its function is as follows. Plays a role in chromatin remodeling and regulation of transcription. Acts as a chromatin reader that recognizes and binds acylated histones: binds histones that are acetylated and/or butyrylated. Component of SWI/SNF chromatin remodeling subcomplex GBAF that carries out key enzymatic activities, changing chromatin structure by altering DNA-histone contacts within a nucleosome in an ATP-dependent manner. Also orchestrates the RAD51-RAD54 complex formation and thereby plays a role in homologous recombination (HR). The protein is Bromodomain-containing protein 9 (Brd9) of Mus musculus (Mouse).